The sequence spans 279 residues: Bifunctional protein FolD (279 aa).

Residues 158-160 (GRS), Ser-183, and Ile-224 each bind NADP(+).

This sequence belongs to the tetrahydrofolate dehydrogenase/cyclohydrolase family. Homodimer.

The catalysed reaction is (6R)-5,10-methylene-5,6,7,8-tetrahydrofolate + NADP(+) = (6R)-5,10-methenyltetrahydrofolate + NADPH. The enzyme catalyses (6R)-5,10-methenyltetrahydrofolate + H2O = (6R)-10-formyltetrahydrofolate + H(+). The protein operates within one-carbon metabolism; tetrahydrofolate interconversion. Catalyzes the oxidation of 5,10-methylenetetrahydrofolate to 5,10-methenyltetrahydrofolate and then the hydrolysis of 5,10-methenyltetrahydrofolate to 10-formyltetrahydrofolate. This Caldicellulosiruptor saccharolyticus (strain ATCC 43494 / DSM 8903 / Tp8T 6331) protein is Bifunctional protein FolD.